The following is a 75-amino-acid chain: Pro-glucagon (75 aa).

This sequence belongs to the glucagon family.

It is found in the secreted. Plays a key role in glucose metabolism and homeostasis. Regulates blood glucose by increasing gluconeogenesis and decreasing glycolysis. The protein is Pro-glucagon (gcg) of Amia calva (Bowfin).